We begin with the raw amino-acid sequence, 121 residues long: Nitrogen fixation nifHD region GlnB-like protein 2 (121 aa).

The protein belongs to the P(II) protein family.

Could be involved in the regulation of nitrogen fixation. The protein is Nitrogen fixation nifHD region GlnB-like protein 2 (glnBB) of Methanothermobacter marburgensis (strain ATCC BAA-927 / DSM 2133 / JCM 14651 / NBRC 100331 / OCM 82 / Marburg) (Methanobacterium thermoautotrophicum).